The sequence spans 322 residues: Tubulin alpha-4 chain (322 aa).

Residues Ser15, Gly19, Thr20, Thr54, Asn81, and Asn103 each coordinate GTP. Residue Glu129 is part of the active site.

Belongs to the tubulin family. As to quaternary structure, dimer of alpha and beta chains. A typical microtubule is a hollow water-filled tube with an outer diameter of 25 nm and an inner diameter of 15 nM. Alpha-beta heterodimers associate head-to-tail to form protofilaments running lengthwise along the microtubule wall with the beta-tubulin subunit facing the microtubule plus end conferring a structural polarity. Microtubules usually have 13 protofilaments but different protofilament numbers can be found in some organisms and specialized cells. The cofactor is Mg(2+). Post-translationally, some glutamate residues at the C-terminus are polyglycylated, resulting in polyglycine chains on the gamma-carboxyl group. Glycylation is mainly limited to tubulin incorporated into axonemes (cilia and flagella) whereas glutamylation is prevalent in neuronal cells, centrioles, axonemes, and the mitotic spindle. Both modifications can coexist on the same protein on adjacent residues, and lowering polyglycylation levels increases polyglutamylation, and reciprocally. The precise function of polyglycylation is still unclear. Some glutamate residues at the C-terminus are polyglutamylated, resulting in polyglutamate chains on the gamma-carboxyl group. Polyglutamylation plays a key role in microtubule severing by spastin (SPAST). SPAST preferentially recognizes and acts on microtubules decorated with short polyglutamate tails: severing activity by SPAST increases as the number of glutamates per tubulin rises from one to eight, but decreases beyond this glutamylation threshold.

It localises to the cytoplasm. Its subcellular location is the cytoskeleton. The catalysed reaction is GTP + H2O = GDP + phosphate + H(+). Functionally, tubulin is the major constituent of microtubules, a cylinder consisting of laterally associated linear protofilaments composed of alpha- and beta-tubulin heterodimers. Microtubules grow by the addition of GTP-tubulin dimers to the microtubule end, where a stabilizing cap forms. Below the cap, tubulin dimers are in GDP-bound state, owing to GTPase activity of alpha-tubulin. In Gallus gallus (Chicken), this protein is Tubulin alpha-4 chain.